Here is a 167-residue protein sequence, read N- to C-terminus: Photosystem I assembly protein Ycf3 (167 aa).

TPR repeat units follow at residues 35–68, 72–105, and 120–153; these read AFAY…EVDA, SYIL…NPSL, and GEQA…APTS.

The protein belongs to the Ycf3 family.

The protein localises to the plastid. It localises to the chloroplast thylakoid membrane. Its function is as follows. Essential for the assembly of the photosystem I (PSI) complex. May act as a chaperone-like factor to guide the assembly of the PSI subunits. The polypeptide is Photosystem I assembly protein Ycf3 (Chlorokybus atmophyticus (Soil alga)).